Here is a 112-residue protein sequence, read N- to C-terminus: Putative pterin-4-alpha-carbinolamine dehydratase (112 aa).

Belongs to the pterin-4-alpha-carbinolamine dehydratase family.

It catalyses the reaction (4aS,6R)-4a-hydroxy-L-erythro-5,6,7,8-tetrahydrobiopterin = (6R)-L-erythro-6,7-dihydrobiopterin + H2O. This Shewanella frigidimarina (strain NCIMB 400) protein is Putative pterin-4-alpha-carbinolamine dehydratase.